The primary structure comprises 207 residues: Large ribosomal subunit protein bL25 (207 aa).

Residues 171-207 (EEETVVTVSAPRAEEEPTTTEAPEPEAVHGKDEEPVE) are disordered. Positions 196–207 (EAVHGKDEEPVE) are enriched in basic and acidic residues.

Belongs to the bacterial ribosomal protein bL25 family. CTC subfamily. In terms of assembly, part of the 50S ribosomal subunit; part of the 5S rRNA/L5/L18/L25 subcomplex. Contacts the 5S rRNA. Binds to the 5S rRNA independently of L5 and L18.

Functionally, this is one of the proteins that binds to the 5S RNA in the ribosome where it forms part of the central protuberance. The polypeptide is Large ribosomal subunit protein bL25 (Listeria monocytogenes serotype 4b (strain F2365)).